The following is a 1187-amino-acid chain: Myelin transcription factor 1-like protein (1187 aa).

A disordered region spans residues 1-22 (MDVDSEEKRHRTRSKGVRVPVE). The segment at 22-65 (EPAIQELFSCPTPGCDGSGHVSGKYARHRSVYGCPLAKKRKTQD) adopts a CCHHC-type 1 zinc-finger fold. Zn(2+) is bound by residues Cys-31, Cys-36, His-49, and Cys-55. 2 disordered regions span residues 56–178 (PLAK…QMSC) and 221–248 (RTESEMNSNTSNSLEDDSDKNENLGRKS). Acidic residues predominate over residues 89 to 172 (ECYESDGTED…EEEEEEEENE (84 aa)). Phosphoserine is present on Ser-251. Disordered stretches follow at residues 343-422 (SETN…DRSE) and 450-514 (REKM…GCDG). Polar residues predominate over residues 344 to 358 (ETNPQDRSQPPNMSV). Composition is skewed to basic and acidic residues over residues 362 to 377 (VRQEDDFPGRTPDRSY), 401 to 412 (AKEDGCHERDDD), 450 to 488 (REKMAMDAGRRDNLRSYEDQSPRQLAGEDRKSKSSDSHV), and 496 to 506 (DPSRTEKRESK). 2 consecutive CCHHC-type zinc fingers follow at residues 498-541 (SRTE…PPEI) and 542-585 (LAMH…KLAK). Positions 507, 512, 525, 531, 551, 556, 569, and 575 each coordinate Zn(2+). The disordered stretch occupies residues 686–710 (ASPSSSTTSSYAPSSSSNLSCGGGS). CCHHC-type zinc fingers lie at residues 897 to 940 (LATS…GIRI), 946 to 989 (DKED…QKDG), and 999 to 1042 (KSVK…MKKA). Zn(2+) contacts are provided by Cys-906, Cys-911, His-924, Cys-930, Cys-955, Cys-960, His-973, Cys-979, Cys-1008, Cys-1013, His-1026, and Cys-1032. The stretch at 1058–1132 (NGIENDEEIK…ANLSQSLIHS (75 aa)) forms a coiled coil.

The protein belongs to the MYT1 family. Interacts with SIN3B. As to expression, brain.

It is found in the nucleus. It localises to the chromosome. In terms of biological role, transcription factor that plays a key role in neuronal differentiation by specifically repressing expression of non-neuronal genes during neuron differentiation. In contrast to other transcription repressors that inhibit specific lineages, mediates repression of multiple differentiation programs. Also represses expression of negative regulators of neurogenesis, such as members of the Notch signaling pathway, including HES1. The combination of three transcription factors, ASCL1, POU3F2/BRN2 and MYT1L, is sufficient to reprogram fibroblasts and other somatic cells into induced neuronal (iN) cells in vitro. Directly binds the 5'-AAGTT-3' core motif present on the promoter of target genes and represses transcription by recruiting a multiprotein complex containing SIN3B. The 5'-AAGTT-3' core motif is absent from the promoter of neural genes. This Mus musculus (Mouse) protein is Myelin transcription factor 1-like protein.